We begin with the raw amino-acid sequence, 134 residues long: Small ribosomal subunit protein uS9 (134 aa).

The disordered stretch occupies residues 109-134 (DARRTEPHKPSKSSKGPRARRQKSYR). Basic residues predominate over residues 118-134 (PSKSSKGPRARRQKSYR).

Belongs to the universal ribosomal protein uS9 family.

In Methanococcus vannielii (strain ATCC 35089 / DSM 1224 / JCM 13029 / OCM 148 / SB), this protein is Small ribosomal subunit protein uS9.